We begin with the raw amino-acid sequence, 188 residues long: RWD domain-containing protein 4 (188 aa).

Residues 9-111 (MELEALRSIY…EYAKDNKEQF (103 aa)) form the RWD domain. Positions 132–167 (TPSAAPSSKKKDKKEQLSKAQKRKLADKTDHKGELP) are disordered. Over residues 155-166 (KLADKTDHKGEL) the composition is skewed to basic and acidic residues.

This Rattus norvegicus (Rat) protein is RWD domain-containing protein 4 (Rwdd4).